Here is a 382-residue protein sequence, read N- to C-terminus: Chorismate synthase (382 aa).

Positions 39 and 45 each coordinate NADP(+). The interval 89–113 (SPEPGGEPRKKALTDARPGHADLTG) is disordered. Basic and acidic residues predominate over residues 94 to 108 (GEPRKKALTDARPGH). FMN contacts are provided by residues 128-130 (RAS), 246-247 (QA), alanine 290, 305-309 (KPIAT), and arginine 331.

Belongs to the chorismate synthase family. In terms of assembly, homotetramer. FMNH2 is required as a cofactor.

The catalysed reaction is 5-O-(1-carboxyvinyl)-3-phosphoshikimate = chorismate + phosphate. Its pathway is metabolic intermediate biosynthesis; chorismate biosynthesis; chorismate from D-erythrose 4-phosphate and phosphoenolpyruvate: step 7/7. Its function is as follows. Catalyzes the anti-1,4-elimination of the C-3 phosphate and the C-6 proR hydrogen from 5-enolpyruvylshikimate-3-phosphate (EPSP) to yield chorismate, which is the branch point compound that serves as the starting substrate for the three terminal pathways of aromatic amino acid biosynthesis. This reaction introduces a second double bond into the aromatic ring system. The protein is Chorismate synthase of Deinococcus radiodurans (strain ATCC 13939 / DSM 20539 / JCM 16871 / CCUG 27074 / LMG 4051 / NBRC 15346 / NCIMB 9279 / VKM B-1422 / R1).